We begin with the raw amino-acid sequence, 196 residues long: Holliday junction branch migration complex subunit RuvA (196 aa).

The tract at residues 1–69 (MIVGLRGTII…EDAHLLFGFC (69 aa)) is domain I. Positions 70 to 148 (EEIEKQTFER…QLLQSQEESI (79 aa)) are domain II. A flexible linker region spans residues 149 to 157 (APSNNLKYE). Residues 157–196 (EASLALQSLGFKRNEIQKVLEHIEALSVSEIVKEALKRLA) are domain III.

The protein belongs to the RuvA family. Homotetramer. Forms an RuvA(8)-RuvB(12)-Holliday junction (HJ) complex. HJ DNA is sandwiched between 2 RuvA tetramers; dsDNA enters through RuvA and exits via RuvB. An RuvB hexamer assembles on each DNA strand where it exits the tetramer. Each RuvB hexamer is contacted by two RuvA subunits (via domain III) on 2 adjacent RuvB subunits; this complex drives branch migration. In the full resolvosome a probable DNA-RuvA(4)-RuvB(12)-RuvC(2) complex forms which resolves the HJ.

It localises to the cytoplasm. Functionally, the RuvA-RuvB-RuvC complex processes Holliday junction (HJ) DNA during genetic recombination and DNA repair, while the RuvA-RuvB complex plays an important role in the rescue of blocked DNA replication forks via replication fork reversal (RFR). RuvA specifically binds to HJ cruciform DNA, conferring on it an open structure. The RuvB hexamer acts as an ATP-dependent pump, pulling dsDNA into and through the RuvAB complex. HJ branch migration allows RuvC to scan DNA until it finds its consensus sequence, where it cleaves and resolves the cruciform DNA. This Helicobacter hepaticus (strain ATCC 51449 / 3B1) protein is Holliday junction branch migration complex subunit RuvA.